The primary structure comprises 217 residues: UPF0193 protein EVG1 (217 aa).

Belongs to the UPF0193 (EVG1) family.

The polypeptide is UPF0193 protein EVG1 (C22orf23) (Homo sapiens (Human)).